A 236-amino-acid chain; its full sequence is Phosphoribosylaminoimidazole-succinocarboxamide synthase (236 aa).

This sequence belongs to the SAICAR synthetase family.

It catalyses the reaction 5-amino-1-(5-phospho-D-ribosyl)imidazole-4-carboxylate + L-aspartate + ATP = (2S)-2-[5-amino-1-(5-phospho-beta-D-ribosyl)imidazole-4-carboxamido]succinate + ADP + phosphate + 2 H(+). It participates in purine metabolism; IMP biosynthesis via de novo pathway; 5-amino-1-(5-phospho-D-ribosyl)imidazole-4-carboxamide from 5-amino-1-(5-phospho-D-ribosyl)imidazole-4-carboxylate: step 1/2. The sequence is that of Phosphoribosylaminoimidazole-succinocarboxamide synthase from Chlorobium phaeobacteroides (strain DSM 266 / SMG 266 / 2430).